A 241-amino-acid polypeptide reads, in one-letter code: Glucosamine-6-phosphate deaminase (241 aa).

Asp67 (proton acceptor; for enolization step) is an active-site residue. The For ring-opening step role is filled by Asn136. His138 (proton acceptor; for ring-opening step) is an active-site residue. Glu143 functions as the For ring-opening step in the catalytic mechanism.

Belongs to the glucosamine/galactosamine-6-phosphate isomerase family. NagB subfamily.

The enzyme catalyses alpha-D-glucosamine 6-phosphate + H2O = beta-D-fructose 6-phosphate + NH4(+). The protein operates within amino-sugar metabolism; N-acetylneuraminate degradation; D-fructose 6-phosphate from N-acetylneuraminate: step 5/5. In terms of biological role, catalyzes the reversible isomerization-deamination of glucosamine 6-phosphate (GlcN6P) to form fructose 6-phosphate (Fru6P) and ammonium ion. The chain is Glucosamine-6-phosphate deaminase from Bacillus pumilus (strain SAFR-032).